We begin with the raw amino-acid sequence, 195 residues long: Imidazoleglycerol-phosphate dehydratase (195 aa).

Belongs to the imidazoleglycerol-phosphate dehydratase family.

The protein localises to the cytoplasm. The enzyme catalyses D-erythro-1-(imidazol-4-yl)glycerol 3-phosphate = 3-(imidazol-4-yl)-2-oxopropyl phosphate + H2O. It participates in amino-acid biosynthesis; L-histidine biosynthesis; L-histidine from 5-phospho-alpha-D-ribose 1-diphosphate: step 6/9. The protein is Imidazoleglycerol-phosphate dehydratase of Geobacillus kaustophilus (strain HTA426).